A 321-amino-acid polypeptide reads, in one-letter code: Peroxidase 5 (321 aa).

A signal peptide spans 1–24 (MERFSLRFVLMMVSIILTSSICQA). Pyrrolidone carboxylic acid is present on Gln-25. Intrachain disulfides connect Cys-35/Cys-115, Cys-68/Cys-73, Cys-121/Cys-317, and Cys-201/Cys-227. His-66 serves as the catalytic Proton acceptor. Positions 67, 70, 72, 74, and 76 each coordinate Ca(2+). Pro-164 serves as a coordination point for substrate. His-194 provides a ligand contact to heme b. Residue Thr-195 participates in Ca(2+) binding. N-linked (GlcNAc...) asparagine glycosylation occurs at Asn-211. Asp-240, Thr-243, and Asp-248 together coordinate Ca(2+). An N-linked (GlcNAc...) asparagine glycan is attached at Asn-285.

It belongs to the peroxidase family. Classical plant (class III) peroxidase subfamily. It depends on heme b as a cofactor. Ca(2+) serves as cofactor.

It localises to the secreted. It catalyses the reaction 2 a phenolic donor + H2O2 = 2 a phenolic radical donor + 2 H2O. Its function is as follows. Removal of H(2)O(2), oxidation of toxic reductants, biosynthesis and degradation of lignin, suberization, auxin catabolism, response to environmental stresses such as wounding, pathogen attack and oxidative stress. These functions might be dependent on each isozyme/isoform in each plant tissue. This Arabidopsis thaliana (Mouse-ear cress) protein is Peroxidase 5 (PER5).